The following is a 433-amino-acid chain: Phosphomethylpyrimidine synthase 2 (433 aa).

Substrate-binding positions include Asn-66, Met-94, Tyr-123, His-162, 184–186 (SRG), 225–228 (DALR), and Glu-264. Zn(2+) is bound at residue His-268. Tyr-291 is a substrate binding site. His-332 provides a ligand contact to Zn(2+). Positions 408, 411, and 415 each coordinate [4Fe-4S] cluster.

This sequence belongs to the ThiC family. Requires [4Fe-4S] cluster as cofactor.

The catalysed reaction is 5-amino-1-(5-phospho-beta-D-ribosyl)imidazole + S-adenosyl-L-methionine = 4-amino-2-methyl-5-(phosphooxymethyl)pyrimidine + CO + 5'-deoxyadenosine + formate + L-methionine + 3 H(+). It participates in cofactor biosynthesis; thiamine diphosphate biosynthesis. In terms of biological role, catalyzes the synthesis of the hydroxymethylpyrimidine phosphate (HMP-P) moiety of thiamine from aminoimidazole ribotide (AIR) in a radical S-adenosyl-L-methionine (SAM)-dependent reaction. The sequence is that of Phosphomethylpyrimidine synthase 2 from Saccharolobus solfataricus (strain ATCC 35092 / DSM 1617 / JCM 11322 / P2) (Sulfolobus solfataricus).